We begin with the raw amino-acid sequence, 265 residues long: Aquaporin-5 (265 aa).

Residues 1–12 (MKKEVCSVAFFK) lie on the Cytoplasmic side of the membrane. A helical transmembrane segment spans residues 13 to 33 (AVFAEFLATLIFVFFGLGSAL). Over 34–39 (KWPSAL) the chain is Extracellular. The helical transmembrane segment at 40–60 (PTILQISIAFGLAIGTLAQAL) threads the bilayer. Residues 61-65 (GPVSG) are Cytoplasmic-facing. An intramembrane region (discontinuously helical) is located at residues 66–74 (GHINPAITL). Positions 69 to 71 (NPA) match the NPA 1 motif. Residues 75–87 (ALLIGNQISLLRA) lie on the Cytoplasmic side of the membrane. Residues 88–108 (IFYVAAQLVGAIAGAGILYWL) traverse the membrane as a helical segment. The Extracellular segment spans residues 109-126 (APGNARGNLAVNALSNNT). N-linked (GlcNAc...) asparagine glycosylation is present at N124. Residues 127–147 (TPGKAVVVELILTFQLALCIF) traverse the membrane as a helical segment. Residues 148–158 (SSTDSRRTSPV) lie on the Cytoplasmic side of the membrane. The chain crosses the membrane as a helical span at residues 159–179 (GSPALSIGLSVTLGHLVGIYF). Position 180 (T180) is a topological domain, extracellular. The discontinuously helical intramembrane region spans 181–191 (GCSMNPARSFG). The NPA 2 motif lies at 185–187 (NPA). At 192–203 (PAVVMNRFSPSH) the chain is on the extracellular side. The chain crosses the membrane as a helical span at residues 204-224 (WVFWVGPIVGAVLAAILYFYL). At 225–265 (LFPSSLSLHDRVAVVKGTYEPEEDWEDHREERKKTIELTAH) the chain is on the cytoplasmic side.

It belongs to the MIP/aquaporin (TC 1.A.8) family. Homotetramer; each monomer provides an independent water pore. Interacts with TRPV4; the interaction is probably indirect and regulates TRPV4 activation by hypotonicity. As to expression, detected at the luminal membrane of secretory epithelial cells in hindpaw sweat glands. Detected in acinar cells in salivary glands, in duct cells in lacrimal glands and in lung (at protein level). Detected in lung, parotid, submandibular, sublingual, and lacrimal gland tissues.

Its subcellular location is the apical cell membrane. It is found in the cell membrane. The protein resides in the cytoplasmic vesicle membrane. It catalyses the reaction H2O(in) = H2O(out). Its function is as follows. Aquaporins form homotetrameric transmembrane channels, with each monomer independently mediating water transport across the plasma membrane along its osmotic gradient. Plays an important role in fluid secretion in salivary glands. Required for TRPV4 activation by hypotonicity. Together with TRPV4, controls regulatory volume decrease in salivary epithelial cells. Seems to play a redundant role in water transport in the eye, lung and in sweat glands. This Mus musculus (Mouse) protein is Aquaporin-5.